The sequence spans 310 residues: Vomeronasal type-1 receptor 53 (310 aa).

Residues 1 to 20 lie on the Extracellular side of the membrane; the sequence is MNKANLLHTDINLKITLFSE. Residues 21–41 form a helical membrane-spanning segment; it reads VSVGISANSILIFAHLCMLLG. Residues 42 to 50 lie on the Cytoplasmic side of the membrane; the sequence is ENRPKPIDL. The chain crosses the membrane as a helical span at residues 51–71; the sequence is YIAFFSLTQLMLLITMGLIAV. At 72–93 the chain is on the extracellular side; it reads DMFMPWGRWDSTTCQSLIYLHR. An intrachain disulfide couples C85 to C172. Residues 94-114 traverse the membrane as a helical segment; sequence LLRGLTLSATCLLNVLWTITL. Topologically, residues 115-134 are cytoplasmic; it reads SPRSSCLTKFKHKSLQHISC. Residues 135–155 traverse the membrane as a helical segment; the sequence is AFLFLCVLYMSFNSHLFISII. Residues 156–183 are Extracellular-facing; that stretch reads AYPNLTLENFMYVTQSCSLIPLSYFRKS. N159 carries an N-linked (GlcNAc...) asparagine glycan. Residues 184-204 traverse the membrane as a helical segment; sequence MFSIPMAIREALLIGLMALSG. The Cytoplasmic segment spans residues 205-238; it reads GYMVAHLWRHKKQAQHLHRTSLSSKASPEQRATR. Residues 239–259 traverse the membrane as a helical segment; the sequence is TIMLLMSFFVVLYILDLVIFH. Residues 260–268 are Extracellular-facing; the sequence is SRMKFKDGS. The helical transmembrane segment at 269–289 threads the bilayer; sequence ILYGVQIIVSHSYATVSPFVF. The Cytoplasmic segment spans residues 290–310; that stretch reads ICTEKRITNFLRSMCGRIVNI.

It belongs to the G-protein coupled receptor 1 family.

The protein resides in the cell membrane. Its function is as follows. Putative pheromone receptor implicated in the regulation of social and reproductive behavior. The protein is Vomeronasal type-1 receptor 53 (Vmn1r53) of Mus musculus (Mouse).